Here is a 328-residue protein sequence, read N- to C-terminus: Gonadotropin-releasing hormone receptor (328 aa).

The Extracellular portion of the chain corresponds to 1-38 (MANGDSPDQNENHCSAINSSILLTPGSLPTLTLSGKIR). The N-linked (GlcNAc...) asparagine glycan is linked to Asn18. A helical membrane pass occupies residues 39 to 58 (VTVTFFLFLLSTIFNTSFLL). The Cytoplasmic segment spans residues 59–77 (KLQNWTQRKEKRKKLSKMK). The helical transmembrane segment at 78 to 97 (VLLKHLTLANLLETLIVMPL) threads the bilayer. Residues 98–115 (DGMWNITVQWYAGELLCK) lie on the Extracellular side of the membrane. An N-linked (GlcNAc...) asparagine glycan is attached at Asn102. Cysteines 114 and 196 form a disulfide. Residues 116-137 (VLSYLKLFSMYAPAFMMVVISL) traverse the membrane as a helical segment. The Cytoplasmic segment spans residues 138-164 (DRSLAITRPLAVKSNSKLGQFMIGLAW). The chain crosses the membrane as a helical span at residues 165 to 184 (LLSSIFAGPQLYIFGMIHLA). Topologically, residues 185-212 (DDSGQTEGFSQCVTHCSFPQWWHQAFYN) are extracellular. Residues 213–232 (FFTFSCLFIIPLLIMLICNA) traverse the membrane as a helical segment. Over 233-281 (KIIFTLTRVLHQDPHKLQLNQSKNNIPQARLRTLKMTVAFATSFTVCWT) the chain is Cytoplasmic. A helical membrane pass occupies residues 282 to 300 (PYYVLGIWYWFDPDMVNRV). The Extracellular portion of the chain corresponds to 301 to 306 (SDPVNH). The helical transmembrane segment at 307 to 326 (FFFLFAFLNPCFDPLIYGYF) threads the bilayer. Residues 327 to 328 (SL) are Cytoplasmic-facing.

The protein belongs to the G-protein coupled receptor 1 family.

The protein resides in the cell membrane. Its function is as follows. Receptor for gonadotropin releasing hormone (GnRH) that mediates the action of GnRH to stimulate the secretion of the gonadotropic hormones luteinizing hormone (LH) and follicle-stimulating hormone (FSH). This receptor mediates its action by association with G-proteins that activate a phosphatidylinositol-calcium second messenger system. In Ovis aries (Sheep), this protein is Gonadotropin-releasing hormone receptor (GNRHR).